The sequence spans 216 residues: Small ribosomal subunit protein uS5 (216 aa).

The tract at residues 1–55 (MDKKLENQKDLLNQDPKVELNSQSVAKNPLNSREVKPIQRRRPLRKNARDKNSKP) is disordered. Over residues 20–31 (LNSQSVAKNPLN) the composition is skewed to polar residues. In terms of domain architecture, S5 DRBM spans 57 to 120 (FEERVIAIHR…KDAQNRLVSV (64 aa)).

This sequence belongs to the universal ribosomal protein uS5 family. As to quaternary structure, part of the 30S ribosomal subunit. Contacts proteins S4 and S8.

Functionally, with S4 and S12 plays an important role in translational accuracy. Its function is as follows. Located at the back of the 30S subunit body where it stabilizes the conformation of the head with respect to the body. In Mesomycoplasma hyopneumoniae (strain 7448) (Mycoplasma hyopneumoniae), this protein is Small ribosomal subunit protein uS5.